A 344-amino-acid chain; its full sequence is Hydrophobic dipeptide epimerase (344 aa).

Residues Thr-126 and 151 to 153 each bind substrate; that span reads KIK. Mg(2+)-binding residues include Asp-184, Glu-210, and Asp-235. Substrate is bound by residues Lys-257 and 307–309; that span reads DLD.

This sequence belongs to the mandelate racemase/muconate lactonizing enzyme family. Mg(2+) is required as a cofactor.

Dipeptide epimerase with a preference for hydrophobic substrates. Catalyzes the epimerization of L-Ala-L-Thr, L-Ala-L-Met, L-Ala-L-His, L-Ala-L-Phe, L-Ala-L-Tyr, L-Ala-L-Trp, L-Ile-L-Ala, L-Ile-L-Ser, L-Ile-L-Met, L-Ile-L-His, L-Ile-L-Phe, L-Ile-L-Tyr, L-Ile-L-Trp, L-Phe-L-Met, L-Phe-L-His, L-Phe-L-Phe, L-Phe-L-Tyr, L-Phe-L-Trp, L-Phe-L-Ser, L-Phe-L-Thr and L-Phe-L-Lys (in vitro). The chain is Hydrophobic dipeptide epimerase from Roseobacter litoralis (strain ATCC 49566 / DSM 6996 / JCM 21268 / NBRC 15278 / OCh 149).